The primary structure comprises 227 residues: MEIVRLSLFGNPNIGVYVFANNSIALVPPSLSSGEKKVIAETLDVELVETKIANTILNGVLVVGNDNGIILPRIILDEELDILNNNLKKHDLNIYVSRSKNTALGNILLCNNKACIAGSELERQELNKISEALGVEALYKDIMNLTIPGSLAVVTDKGGVIHPDISDDENRELKEIFKVAFERATVNSGIPFIKSGLIANNKGIIVGEYTTGPEILRIRRGLSGGAI.

The protein belongs to the eIF-6 family.

In terms of biological role, binds to the 50S ribosomal subunit and prevents its association with the 30S ribosomal subunit to form the 70S initiation complex. This Staphylothermus marinus (strain ATCC 43588 / DSM 3639 / JCM 9404 / F1) protein is Translation initiation factor 6.